We begin with the raw amino-acid sequence, 811 residues long: Endothelin-converting enzyme 2 (811 aa).

The Cytoplasmic segment spans residues 1 to 106; it reads MNVALQELGA…QLLGSRTQLE (106 aa). A disordered region spans residues 22–64; it reads LRDEDAPETPVEGGASPDAMEVGKGASPFSPGPSPGMTPGTPR. The chain crosses the membrane as a helical; Signal-anchor for type II membrane protein span at residues 107-127; it reads LVLAGASLLLAALLLGCLVAL. At 128 to 811 the chain is on the lumenal side; that stretch reads GVQYHRDPSH…MNPGQLCEVW (684 aa). A Peptidase M13 domain is found at 139 to 811; the sequence is TCLTEACIRV…MNPGQLCEVW (673 aa). Disulfide bonds link C140–C145, C163–C796, C171–C756, C227–C476, and C685–C808. N-linked (GlcNAc...) asparagine glycans are attached at residues N207, N211, N252, N312, N357, N424, and N580. H648 is a Zn(2+) binding site. E649 is a catalytic residue. Residue H652 coordinates Zn(2+). Residues N673 and N681 are each glycosylated (N-linked (GlcNAc...) asparagine). E708 is a Zn(2+) binding site. The Proton donor role is filled by D712.

It belongs to the peptidase M13 family. Zn(2+) serves as cofactor.

It localises to the golgi apparatus membrane. Its subcellular location is the cytoplasmic vesicle. The protein resides in the secretory vesicle membrane. The catalysed reaction is Hydrolysis of the 21-Trp-|-Val-22 bond in big endothelin to form endothelin 1.. Converts big endothelin-1 to endothelin-1. Also involved in the processing of various neuroendocrine peptides, including neurotensin, angiotensin I, substance P, proenkephalin-derived peptides, and prodynorphin-derived peptides. May play a role in amyloid-beta processing. In Homo sapiens (Human), this protein is Endothelin-converting enzyme 2.